Reading from the N-terminus, the 256-residue chain is uncharacterized protein (256 aa).

The first 23 residues, methionine 1 to glycine 23, serve as a signal peptide directing secretion. Cysteine 24 carries the N-palmitoyl cysteine lipid modification. Cysteine 24 carries S-diacylglycerol cysteine lipidation.

The protein belongs to the staphylococcal tandem lipoprotein family.

The protein localises to the cell membrane. This is an uncharacterized protein from Staphylococcus aureus (strain COL).